The sequence spans 93 residues: UPF0358 protein YlaN (93 aa).

It belongs to the UPF0358 family.

Functionally, essential for cell growth and for normal cell shape. The chain is UPF0358 protein YlaN (ylaN) from Bacillus subtilis (strain 168).